We begin with the raw amino-acid sequence, 175 residues long: Zinc finger protein ZAT18 (175 aa).

2 consecutive C2H2-type zinc fingers follow at residues 49–71 (FECK…RASH) and 93–115 (HKCT…MRKH). The Nuclear localization signal motif lies at 71 to 78 (HKKPKLIV). Residues 146 to 152 (LDLNLTP) carry the EAR-like (transcriptional repression) motif.

In terms of tissue distribution, mostly expressed in stems, siliques and leaves, and, to a lower extent, in cotyledons, hypocotyls and roots.

It is found in the nucleus. Functionally, transcription factor involved in stress responses. Positive regulator of the jasmonic acid (JA)- mediated signaling pathway. Triggers the up-regulation of LOX3, VSP2, PAL1 and PAL2 in a JA-dependent manner. Promotes drought and osmotic stress tolerance by preventing reactive oxygen species (ROS) production (e.g. H(2)O(2)). The sequence is that of Zinc finger protein ZAT18 from Arabidopsis thaliana (Mouse-ear cress).